The primary structure comprises 472 residues: Argininosuccinate lyase (472 aa).

This sequence belongs to the lyase 1 family. Argininosuccinate lyase subfamily.

It is found in the cytoplasm. It carries out the reaction 2-(N(omega)-L-arginino)succinate = fumarate + L-arginine. Its pathway is amino-acid biosynthesis; L-arginine biosynthesis; L-arginine from L-ornithine and carbamoyl phosphate: step 3/3. The chain is Argininosuccinate lyase from Synechococcus sp. (strain CC9311).